The chain runs to 149 residues: Nucleoside diphosphate kinase (149 aa).

Residues K9, F57, R85, T91, R102, and N112 each contribute to the ATP site. Residue H115 is the Pros-phosphohistidine intermediate of the active site.

This sequence belongs to the NDK family. Homotetramer. It depends on Mg(2+) as a cofactor.

It localises to the cytoplasm. The enzyme catalyses a 2'-deoxyribonucleoside 5'-diphosphate + ATP = a 2'-deoxyribonucleoside 5'-triphosphate + ADP. The catalysed reaction is a ribonucleoside 5'-diphosphate + ATP = a ribonucleoside 5'-triphosphate + ADP. Major role in the synthesis of nucleoside triphosphates other than ATP. The ATP gamma phosphate is transferred to the NDP beta phosphate via a ping-pong mechanism, using a phosphorylated active-site intermediate. The sequence is that of Nucleoside diphosphate kinase from Staphylococcus epidermidis (strain ATCC 35984 / DSM 28319 / BCRC 17069 / CCUG 31568 / BM 3577 / RP62A).